Reading from the N-terminus, the 306-residue chain is HTH-type transcriptional regulator AlkR (306 aa).

The 99-residue stretch at 207–305 folds into the HTH araC/xylS-type domain; it reads SNALAAIHAY…EQSPKHYRQQ (99 aa). 2 DNA-binding regions (H-T-H motif) span residues 224 to 245 and 272 to 295; these read ESLA…QSIV and IQQI…KRQF.

Its pathway is hydrocarbon metabolism; alkane degradation. Its function is as follows. This protein activates the expression of the alkane 1-monooxygenase AlkM. The polypeptide is HTH-type transcriptional regulator AlkR (alkR) (Acinetobacter baylyi (strain ATCC 33305 / BD413 / ADP1)).